Here is a 339-residue protein sequence, read N- to C-terminus: Uricase (339 aa).

Catalysis depends on charge relay system residues K33 and T78. Urate contacts are provided by T78, D79, F201, R218, V266, Q267, and N293. The active-site Charge relay system is H295. Residues 337–339 carry the Microbody targeting signal motif; sequence SHL.

This sequence belongs to the uricase family.

The protein resides in the peroxisome. It carries out the reaction urate + O2 + H2O = 5-hydroxyisourate + H2O2. Its pathway is purine metabolism; urate degradation; (S)-allantoin from urate: step 1/3. Functionally, catalyzes the oxidation of uric acid to 5-hydroxyisourate, which is further processed to form (S)-allantoin. The sequence is that of Uricase (Uro) from Drosophila subobscura (Fruit fly).